The following is a 376-amino-acid chain: Queuine tRNA-ribosyltransferase (376 aa).

The active-site Proton acceptor is Asp-90. Residues 90–94, Asp-144, Gln-193, and Gly-220 each bind substrate; that span reads DSGGF. Residues 251 to 257 form an RNA binding region; the sequence is GVGTPED. Asp-270 (nucleophile) is an active-site residue. The segment at 275–279 is RNA binding; important for wobble base 34 recognition; the sequence is TRNAR. Zn(2+)-binding residues include Cys-308, Cys-310, Cys-313, and His-339.

It belongs to the queuine tRNA-ribosyltransferase family. Homodimer. Within each dimer, one monomer is responsible for RNA recognition and catalysis, while the other monomer binds to the replacement base PreQ1. Requires Zn(2+) as cofactor.

It carries out the reaction 7-aminomethyl-7-carbaguanine + guanosine(34) in tRNA = 7-aminomethyl-7-carbaguanosine(34) in tRNA + guanine. The protein operates within tRNA modification; tRNA-queuosine biosynthesis. Functionally, catalyzes the base-exchange of a guanine (G) residue with the queuine precursor 7-aminomethyl-7-deazaguanine (PreQ1) at position 34 (anticodon wobble position) in tRNAs with GU(N) anticodons (tRNA-Asp, -Asn, -His and -Tyr). Catalysis occurs through a double-displacement mechanism. The nucleophile active site attacks the C1' of nucleotide 34 to detach the guanine base from the RNA, forming a covalent enzyme-RNA intermediate. The proton acceptor active site deprotonates the incoming PreQ1, allowing a nucleophilic attack on the C1' of the ribose to form the product. After dissociation, two additional enzymatic reactions on the tRNA convert PreQ1 to queuine (Q), resulting in the hypermodified nucleoside queuosine (7-(((4,5-cis-dihydroxy-2-cyclopenten-1-yl)amino)methyl)-7-deazaguanosine). The polypeptide is Queuine tRNA-ribosyltransferase (Cupriavidus taiwanensis (strain DSM 17343 / BCRC 17206 / CCUG 44338 / CIP 107171 / LMG 19424 / R1) (Ralstonia taiwanensis (strain LMG 19424))).